A 456-amino-acid chain; its full sequence is Histidine--tRNA ligase (456 aa).

The tract at residues 1 to 20 is disordered; the sequence is MTQSENVAAAGGAKTEPKVR.

It belongs to the class-II aminoacyl-tRNA synthetase family. As to quaternary structure, homodimer.

It is found in the cytoplasm. The catalysed reaction is tRNA(His) + L-histidine + ATP = L-histidyl-tRNA(His) + AMP + diphosphate + H(+). In Cupriavidus necator (strain ATCC 17699 / DSM 428 / KCTC 22496 / NCIMB 10442 / H16 / Stanier 337) (Ralstonia eutropha), this protein is Histidine--tRNA ligase.